The chain runs to 271 residues: Type III pantothenate kinase (271 aa).

Position 6–13 (6–13 (DVRNTHTV)) interacts with ATP. A substrate-binding site is contributed by 109 to 112 (GADR). Asp-111 functions as the Proton acceptor in the catalytic mechanism. Asp-131 lines the K(+) pocket. Ser-134 is an ATP binding site. Thr-186 is a binding site for substrate.

This sequence belongs to the type III pantothenate kinase family. Homodimer. It depends on NH4(+) as a cofactor. K(+) serves as cofactor.

Its subcellular location is the cytoplasm. It catalyses the reaction (R)-pantothenate + ATP = (R)-4'-phosphopantothenate + ADP + H(+). It participates in cofactor biosynthesis; coenzyme A biosynthesis; CoA from (R)-pantothenate: step 1/5. Catalyzes the phosphorylation of pantothenate (Pan), the first step in CoA biosynthesis. The polypeptide is Type III pantothenate kinase (Mycobacterium avium (strain 104)).